The sequence spans 3033 residues: MSTNPKPQRKTKRNTNRRPQDVKFPGGGQIVGGVYLLPRRGPRLGVRATRKTSERSQPRGRRQPIPKDRRSAGKSWGRPGYPWPLYGNEGLGWAGWLLSPRGSRPSWGPTDPRHRSRNLGKVIDTLTCGFADLMGYIPVVGAPVGGVARALAHGVRVLEDGINYATGNLPGCSFSIFLLALLSCMSVPVSAVEVKNTSQIYMATNDCSNNSITWQLEGAVLHVPGCVPCESTGNISRCWIPVTPNVAVRERGALTKGLRTHIDLIVVSATFCSALYIGDVCGAIMIAAQATIISPQHHTFVQDCNCSIYPGHVTGHRMAWDMMMNWSPATTMIMAYFMRVPEVVLDIITGAHWGVMFGLAYFSMQGAWAKVVVILLLTAGVDAQTHTISGHAARTTHGLVSLFTPGSQQNIQLVNTNGSWHINRTALNCNDSLKTGFIAALFYSHKFNSSGCPQRMSSCRSIEEFRIGWGNLEYEENVTNDDNMRPYCWHYPPRPCGIVPAQTVCGPVYCFTPSPVVVGTTDRRGVPTYTWGENDTDVFLLNSTRPPRGAWFGCTWMNSTGFTKTCGAPPCRIRPDFNSSEDLLCPTDCFRKHSEATYTRCGAGPWLTPKCLFHYPYRLWHYPCTINFTIHKIRMFIGGVEHRLEAACNFTRGDRCNLEDRDRSQLSPLLHSTTEWAILPCTFSDMPALSTGLLHLHQNIVDVQYLYGLSPAITKYIVKWEWVVLLFLLLADARVCACLWMLLLLGQAEAALEKLVILHAASAASSHGMLCFIIFFIAAWYIKGRVTPLVTYSYLGMWSFSLLLLALPQQAYALDTTEQGQIGLVLLVVISVFTLSPAYKILLCRSLWWLSYLLVRAEALIQDWVPPWQARGGRDGIIWAATIFCPGVLFDITNWLLAILGPGYLLRSVLTSTPYFVRAQALLRICAAVRHLSGGKYVQMMLLTLGKWTGTYIYDHLSPMSGWAASGLRDLAVAVEPIVFSPMEKKVIVWGAETAACGDILHGLPVSARLGQEVLLGPADEYTSKGWKLLAPITAYAQQTRGLLGTIVVSMTGRDKTEQAGEIQVLSTVTQSFLGTTISGILWTVFHGAGNKTLAGSRGPVTQMYSSAEGDLVGWPSPPGTRSLDPCTCGAVDLYLVTRNADVIPARRQGDRRGALLSPRPLSSLKGSSGGPVLCPRGHAVGIFRAAICTRGAAKSIDFIPIESLDVIIRSPNFTDNSSPPAVPQTYQVGYLHAPTGSGKSTKVPASYAAQGYKVLVLNPSVAATLGFGAYMSKAHGINPNIRTGVRTVTTGESITYSTYGKFLADGGCSGGAYDVIICDECHSVDATTILGIGTVLDQAETAGARLTVLATATPPGSVTTPHPNIEEVALGHEGEIPFYGKAIPLSQIKGGRHLIFCHSKKKCDELAAALRGMGLNAVAYYRGLDVSVIPTQGDVVVVATDALMTGFTGDFDSVVDCNVAVTQTVDFSLDPTFTVTTQTVPQDAVSRSQRRGRTGRGRLGIYRYVSSGERASGMFDSVVLCECYDAGAAWYELTPAETTVRLRAYFNTPGLPVCQDHLEFWEAVFTGLTHIDAHFLSQTKQAGENFPYLVAYQATVCARAKAPPPSWDVMWKCLIRLKPTLTGPTPLLYRLGPVTNETTLTHPVTKYIATCMQADLEIMTSTWVLAGGVLAAIAAYCLATGCVVCIGRVNINQKTIVAPDKEVLYEAFDEMEECASRALLLEEGQRIAEMLKSKIQGLLQQATKQAQDIQPAVQATWPKLEQFWAKHMWNFISGIQYLAGLSTLPGNPAVAAMMAFSAALTSPLPTSTTILLNIMGGWLASQIAPAAGATGFVVSGLVGAAVGSIGLGKILVDVLAGYGAGISGALVAFKIMSGEKPSVEDVVNLLPGILSPGALVVGVICAAILRRHVGQGEGAVQWMNRLIAFASRGNHVAPTHYVAESDASQRVTQLLGSLTITSLLRRLHTWITEDCPVPCAGSWLRDIWDWACTILTDFKNWLSTKLLPKMPGLPFISCQRGHKGAWTGTGIMTTRCPCGAVVSGNVRHGSMRITGPKTCMNTWQGTFPINCYTEGQCAPQPTHNYKTAIWKVAAAEYAEVTRHGSYAYVTGLTNDNLKVPCQLPAPEFFSWVDGVQIHRFAPTPKPFIRDEVSFTVGLNSFVVGSQLPCEPEPDTEVLASMLTDPSHITAEAAARRLARGSPPSEASSSASQLSAPSLRATCTAHAKNYAVEMVDANFFMGSDVTRIESETKVLILDSLDPSVEEEDEREPSVPSEYLLPKKKFPQALPVWARPDYNPPVVETWKRPDYDPPTVSGCALPPRVTAPTPPPRRRRALVLSQSNVGEALQALAIKSFGQLPPSCDSGRSTGMDTTDATDQPALKESTDSEAGSDSSMPPLEGEPGDPDLESGSVEYHPSSQEGEAAPDLDSGSWSTCSEEGGSEVCCSMSYSWTGALITPCGPEEEKLPINPLSNSLLRYHNKVYSTTSRSASQRAKKVTFDRVQLLDSHYDQVLKDIKLAASKVSANLLSIEEACALTPPHSARSKYGFGAKEVRSLSRKAVDHIKSVWKDLLEDQQTPIPTTIMAKNEVFCIDPTKGGKKAARLIVFPDLGVRVCEKMALYDITQKLPQAVMGASYGFQYSPAQRVDFLLRAWKEKKDPMGFSYDTRCFDSTVTERDIRTEESIYLACSLPEEARVAIHSLTERLYVGGPMMNSKGQSCGYRRCRASGVLTTSMGNTITCYVKALAACKAAGIVAPTMLVCGDDLVVISESQGAEEDERNLRVFTEAMTRYSAPPGDPPKPEYDLELITSCSSNVSVALDQHGRRMYYLTRDPSTPLARAAWETARHSPVNSWLGNIIQYAPTIWVRMVLMTHFFSVLMAQETLDQDLNFEMYGAVYSVNPLDLPAIIERLHGLEAFSLHGYSPTELTRVAAALRKLGAPPLRAWKSRARAVRASLISQGGRAATCGFYLFNWAVRTKRKLTPLPAARRLDLSGWFTVGAGGGDIYHSVSRARPRFLLLCLLLLSVGVGIFLLPAR.

At Ser-2 the chain carries N-acetylserine; by host. Positions 2–23 (STNPKPQRKTKRNTNRRPQDVK) are interaction with STAT1. An interaction with EIF2AK2/PKR region spans residues 2–58 (STNPKPQRKTKRNTNRRPQDVKFPGGGQIVGGVYLLPRRGPRLGVRATRKTSERSQP). Positions 2–59 (STNPKPQRKTKRNTNRRPQDVKFPGGGQIVGGVYLLPRRGPRLGVRATRKTSERSQPR) are interaction with DDX3X. The segment at 2-75 (STNPKPQRKT…PKDRRSAGKS (74 aa)) is disordered. Topologically, residues 2 to 168 (STNPKPQRKT…EDGINYATGN (167 aa)) are cytoplasmic. Short sequence motifs (nuclear localization signal) lie at residues 5–13 (PKPQRKTKR) and 38–43 (PRRGPR). Residues 7–16 (PQRKTKRNTN) show a composition bias toward basic residues. Residues 32–47 (GGVYLLPRRGPRLGVR) show a composition bias toward low complexity. Ser-53 bears the Phosphoserine; by host mark. 2 consecutive short sequence motifs (nuclear localization signal) follow at residues 58-64 (PRGRRQP) and 66-71 (PKDRRS). Ser-99 and Ser-116 each carry phosphoserine; by host. The tract at residues 112 to 152 (PRHRSRNLGKVIDTLTCGFADLMGYIPVVGAPVGGVARALA) is important for endoplasmic reticulum and mitochondrial localization. Residues 122–173 (VIDTLTCGFADLMGYIPVVGAPVGGVARALAHGVRVLEDGINYATGNLPGCS) are interaction with APOA2. Positions 164-167 (YATG) are important for lipid droplets localization. Residues 169 to 189 (LPGCSFSIFLLALLSCMSVPV) traverse the membrane as a helical segment. The propeptide at 178–191 (LLALLSCMSVPVSA) is ER anchor for the core protein, removed in mature form by host signal peptidase. Residues 190 to 358 (SAVEVKNTSQ…TGAHWGVMFG (169 aa)) are Lumenal-facing. Asn-196, Asn-209, and Asn-234 each carry an N-linked (GlcNAc...) asparagine; by host glycan. An important for fusion region spans residues 265-296 (IVVSATFCSALYIGDVCGAIMIAAQATIISPQ). An N-linked (GlcNAc...) asparagine; by host glycan is attached at Asn-305. The helical transmembrane segment at 359-379 (LAYFSMQGAWAKVVVILLLTA) threads the bilayer. Residues 380-729 (GVDAQTHTIS…WEWVVLLFLL (350 aa)) are Lumenal-facing. Positions 385 to 412 (THTISGHAARTTHGLVSLFTPGSQQNIQ) are HVR1. Asn-417, Asn-423, and Asn-430 each carry an N-linked (GlcNAc...) (high mannose) asparagine; by host glycan. 4 disulfide bridges follow: Cys-429/Cys-554, Cys-452/Cys-459, Cys-488/Cys-496, and Cys-505/Cys-510. A glycan (N-linked (GlcNAc...) asparagine; by host) is linked at Asn-448. Residues 475–480 (EENVTN) form an HVR2 region. Residue Asn-477 is glycosylated (N-linked (GlcNAc...) asparagine; by host). Residues 482–495 (DNMRPYCWHYPPRP) are CD81-binding 1. An N-linked (GlcNAc...) asparagine; by host glycan is attached at Asn-534. The segment at 546–553 (PPRGAWFG) is CD81-binding 2. Asn-558 carries N-linked (GlcNAc...) asparagine; by host glycosylation. 4 disulfide bridges follow: Cys-566-Cys-571, Cys-585-Cys-589, Cys-601-Cys-624, and Cys-611-Cys-648. N-linked (GlcNAc...) (high mannose) asparagine; by host glycans are attached at residues Asn-627 and Asn-649. Cys-656 and Cys-681 are joined by a disulfide. The segment at 664 to 675 (SQLSPLLHSTTE) is PKR/eIF2-alpha phosphorylation homology domain (PePHD). A helical membrane pass occupies residues 730-750 (LADARVCACLWMLLLLGQAEA). The Lumenal segment spans residues 751-761 (ALEKLVILHAA). Residues 762-782 (SAASSHGMLCFIIFFIAAWYI) traverse the membrane as a helical segment. The Cytoplasmic segment spans residues 783-786 (KGRV). Residues 787 to 807 (TPLVTYSYLGMWSFSLLLLAL) form a helical membrane-spanning segment. Topologically, residues 808-817 (PQQAYALDTT) are lumenal. Residues 818–838 (EQGQIGLVLLVVISVFTLSPA) traverse the membrane as a helical segment. Residues 839-885 (YKILLCRSLWWLSYLLVRAEALIQDWVPPWQARGGRDGIIWAATIFC) lie on the Cytoplasmic side of the membrane. A helical transmembrane segment spans residues 886–906 (PGVLFDITNWLLAILGPGYLL). Positions 903-1030 (GYLLRSVLTS…EYTSKGWKLL (128 aa)) constitute a Peptidase C18 domain. At 907–932 (RSVLTSTPYFVRAQALLRICAAVRHL) the chain is on the lumenal side. The protease NS2-3 stretch occupies residues 908 to 1210 (SVLTSTPYFV…PIESLDVIIR (303 aa)). Cys-926 carries the S-palmitoyl cysteine; by host lipid modification. The chain crosses the membrane as a helical span at residues 933–953 (SGGKYVQMMLLTLGKWTGTYI). The tract at residues 933–953 (SGGKYVQMMLLTLGKWTGTYI) is interaction with host SCPS1. The Cytoplasmic segment spans residues 954-1661 (YDHLSPMSGW…CMQADLEIMT (708 aa)). Residues His-956, Glu-976, and Cys-997 each act as for protease NS2 activity; shared with dimeric partner in the active site. Residues 1031–1212 (APITAYAQQT…ESLDVIIRSP (182 aa)) enclose the Peptidase S29 domain. Residues His-1087 and Asp-1111 each act as charge relay system; for serine protease NS3 activity in the active site. Residues Cys-1127 and Cys-1129 each coordinate Zn(2+). Ser-1169 (charge relay system; for serine protease NS3 activity) is an active-site residue. The Zn(2+) site is built by Cys-1175 and His-1179. Residues 1221–1373 (PAVPQTYQVG…PNIEEVALGH (153 aa)) enclose the Helicase ATP-binding domain. Residue 1234-1241 (APTGSGKS) participates in ATP binding. 2 residues coordinate Mg(2+): Ser-1241 and Glu-1321. Positions 1320 to 1323 (DECH) match the DECH box motif. The tract at residues 1490–1502 (QRRGRTGRGRLGI) is RNA-binding. A helical transmembrane segment spans residues 1662-1682 (STWVLAGGVLAAIAAYCLATG). Residues 1683–1694 (CVVCIGRVNINQ) are NS3-binding. Residues 1683–1809 (CVVCIGRVNI…ALTSPLPTST (127 aa)) lie on the Cytoplasmic side of the membrane. The helical transmembrane segment at 1810 to 1830 (TILLNIMGGWLASQIAPAAGA) threads the bilayer. The Lumenal segment spans residues 1831–1832 (TG). A helical transmembrane segment spans residues 1833 to 1853 (FVVSGLVGAAVGSIGLGKILV). A topological domain (cytoplasmic) is located at residue Asp-1854. A helical transmembrane segment spans residues 1855–1875 (VLAGYGAGISGALVAFKIMSG). The Lumenal segment spans residues 1876–1885 (EKPSVEDVVN). A helical membrane pass occupies residues 1886–1906 (LLPGILSPGALVVGVICAAIL). The Cytoplasmic portion of the chain corresponds to 1907–1976 (RRHVGQGEGA…WITEDCPVPC (70 aa)). A lipid anchor (S-palmitoyl cysteine; by host) is attached at Cys-1976. An intramembrane segment occupies 1977 to 2007 (AGSWLRDIWDWACTILTDFKNWLSTKLLPKM). Residues 2008–3012 (PGLPFISCQR…YHSVSRARPR (1005 aa)) are Cytoplasmic-facing. Zn(2+) is bound by residues Cys-2015, Cys-2033, Cys-2035, and Cys-2056. The tract at residues 2124-2212 (EFFSWVDGVQ…ASSSASQLSA (89 aa)) is FKBP8-binding. Residues 2124–2332 (EFFSWVDGVQ…PTPPPRRRRA (209 aa)) form a transcriptional activation region. The segment at 2139-2143 (PTPKP) is interaction with non-structural protein 4A. The disordered stretch occupies residues 2193–2212 (RLARGSPPSEASSSASQLSA). Positions 2193 to 2460 (RLARGSPPSE…ALITPCGPEE (268 aa)) are interaction with host SKP2. Phosphoserine; by host is present on residues Ser-2198, Ser-2201, Ser-2205, Ser-2208, Ser-2211, and Ser-2214. The segment covering 2198–2212 (SPPSEASSSASQLSA) has biased composition (low complexity). The segment at 2214–2249 (SLRATCTAHAKNYAVEMVDANFFMGSDVTRIESETK) is ISDR. The interaction with EIF2AK2/PKR stretch occupies residues 2214–2275 (SLRATCTAHA…REPSVPSEYL (62 aa)). Positions 2249–2306 (KVLILDSLDPSVEEEDEREPSVPSEYLLPKKKFPQALPVWARPDYNPPVVETWKRPDY) are NS4B-binding. The interval 2299-2376 (ETWKRPDYDP…MDTTDATDQP (78 aa)) is V3. The disordered stretch occupies residues 2308–2328 (PPTVSGCALPPRVTAPTPPPR). The SH3-binding signature appears at 2322 to 2325 (APTP). Positions 2327 to 2335 (PRRRRALVL) match the Nuclear localization signal motif. A Glycyl lysine isopeptide (Lys-Gly) (interchain with G-Cter in ubiquitin) cross-link involves residue Lys-2350. A disordered region spans residues 2353–2431 (GQLPPSCDSG…PDLDSGSWST (79 aa)). Positions 2361–2373 (SGRSTGMDTTDAT) are enriched in polar residues. A phosphoserine; by host mark is found at Ser-2471 and Ser-2484. Residues 2656-2774 (PMGFSYDTRC…ISESQGAEED (119 aa)) form the RdRp catalytic domain. Mg(2+) is bound by residues Asp-2662, Asp-2760, and Asp-2761. A helical membrane pass occupies residues 3013–3033 (FLLLCLLLLSVGVGIFLLPAR).

The protein belongs to the hepacivirus polyprotein family. As to quaternary structure, homooligomer. Interacts with E1 (via C-terminus). Interacts with the non-structural protein 5A. Interacts (via N-terminus) with host STAT1 (via SH2 domain); this interaction results in decreased STAT1 phosphorylation and ubiquitin-mediated proteasome-dependent STAT1 degradation, leading to decreased IFN-stimulated gene transcription. Interacts with host STAT3; this interaction constitutively activates STAT3. Interacts with host LTBR receptor. Interacts with host TNFRSF1A receptor and possibly induces apoptosis. Interacts with host HNRPK. Interacts with host YWHAE. Interacts with host UBE3A/E6AP. Interacts with host DDX3X. Interacts with host APOA2. Interacts with host RXRA protein. Interacts with host SP110 isoform 3/Sp110b; this interaction sequesters the transcriptional corepressor SP110 away from the nucleus. Interacts with host CREB3 nuclear transcription protein; this interaction triggers cell transformation. Interacts with host ACY3. Interacts with host C1QR1. Interacts with host RBM24; this interaction, which enhances the interaction of the mature core protein with 5'-UTR, may inhibit viral translation and favor replication. Interacts with host EIF2AK2/PKR; this interaction induces the autophosphorylation of EIF2AK2. Part of the viral assembly initiation complex composed of NS2, E1, E2, NS3, NS4A, NS5A and the mature core protein. Forms a heterodimer with envelope glycoprotein E2. Interacts with mature core protein. Interacts with protease NS2. The heterodimer E1/E2 interacts with host CLDN1; this interaction plays a role in viral entry into host cell. Interacts with host SPSB2 (via C-terminus). Part of the viral assembly initiation complex composed of NS2, E1, E2, NS3, NS4A, NS5A and the mature core protein. Interacts with host NEURL3; this interaction prevents E1 binding to glycoprotein E2. In terms of assembly, forms a heterodimer with envelope glycoprotein E1. Interacts with host CD81 and SCARB1 receptors; these interactions play a role in viral entry into host cell. Interacts with host EIF2AK2/PKR; this interaction inhibits EIF2AK2 and probably allows the virus to evade the innate immune response. Interacts with host CD209/DC-SIGN and CLEC4M/DC-SIGNR. Interact with host SPCS1; this interaction is essential for viral particle assembly. Interacts with protease NS2. The heterodimer E1/E2 interacts with host CLDN1; this interaction plays a role in viral entry into host cell. Part of the viral assembly initiation complex composed of NS2, E1, E2, NS3, NS4A, NS5A and the mature core protein. Interacts with host SLC3A2/4F2hc; the interaction may facilitate viral entry into host cell. Interacts with human PLSCR1. As to quaternary structure, homohexamer. Homoheptamer. Interacts with protease NS2. Homodimer. Interacts with host SPCS1; this interaction is essential for viral particle assembly. Interacts with envelope glycoprotein E1. Interacts with envelope glycoprotein E2. Interacts with viroporin p7. Interacts with serine protease/helicase NS3. Part of the replication complex composed of NS2, NS3, NS4A, NS4B, NS5A and the RNA-directed RNA polymerase embedded in an ER-derived membranous web. Part of the viral assembly initiation complex composed of NS2, E1, E2, NS3, NS4A, NS5A and the mature core protein. In terms of assembly, interacts with protease NS2. Interacts with non-structural protein 4A; this interaction stabilizes the folding of NS3 serine protease. NS3-NS4A interaction is essential for NS3 activation and allows membrane anchorage of the latter. NS3/NS4A complex also prevents phosphorylation of host IRF3, thus preventing the establishment of dsRNA induced antiviral state. Interacts with host MAVS; this interaction leads to the cleavage and inhibition of host MAVS. Interacts with host TICAM1; this interaction leads to the cleavage and inhibition of host TICAM1. Interacts with host TANK-binding kinase/TBK1; this interaction results in the inhibition of the association between TBK1 and IRF3, which leads to the inhibition of IRF3 activation. Interacts with host RBM24. Part of the replication complex composed of NS2, NS3, NS4A, NS4B, NS5A and the RNA-directed RNA polymerase embedded in an ER-derived membranous web. Part of the viral assembly initiation complex composed of NS2, E1, E2, NS3, NS4A, NS5A and the mature core protein. As to quaternary structure, interacts with NS3 serine protease; this interaction stabilizes the folding of NS3 serine protease. NS3-NS4A interaction is essential for NS3 activation and allows membrane anchorage of the latter. Interacts with non-structural protein 5A (via N-terminus). Part of the replication complex composed of NS2, NS3, NS4A, NS4B, NS5A and the RNA-directed RNA polymerase embedded in an ER-derived membranous web. Part of the viral assembly initiation complex composed of NS2, E1, E2, NS3, NS4A, NS5A and the mature core protein. Homomultimer. Interacts with non-structural protein NS5A. Interacts with host PLA2G4C; this interaction likely initiates the recruitment of replication complexes to lipid droplets. Interacts with host STING; this interaction disrupts the interaction between STING and TBK1 thereby suppressing the interferon signaling. Part of the replication complex composed of NS2, NS3, NS4A, NS4B, NS5A and the RNA-directed RNA polymerase embedded in an ER-derived membranous web. In terms of assembly, monomer. Homodimer; dimerization is required for RNA-binding. Interacts with the mature core protein. Interacts (via N-terminus) with non-structural protein 4A. Interacts with non-structural protein 4B. Interacts (via region D2) with RNA-directed RNA polymerase. Part of the viral assembly initiation complex composed of NS2, E1, E2, NS3, NS4A, NS5A and the mature core protein. Part of the replication complex composed of NS2, NS3, NS4A, NS4B, NS5A and the RNA-directed RNA polymerase embedded in an ER-derived membranous web. Interacts with host GRB2. Interacts with host BIN1. Interacts with host PIK3R1. Interacts with host SRCAP. Interacts with host FKBP8. Interacts (via C-terminus) with host VAPB (via MSP domain). Interacts with host EIF2AK2/PKR; this interaction leads to disruption of EIF2AK2 dimerization by NS5A and probably allows the virus to evade the innate immune response. Interacts (via N-terminus) with host PACSIN2 (via N-terminus); this interaction attenuates protein kinase C alpha-mediated phosphorylation of PACSIN2 by disrupting the interaction between PACSIN2 and PRKCA. Interacts (via N-terminus) with host SRC kinase (via SH2 domain). Interacts with most Src-family kinases. Interacts with host IFI27 and SKP2; promotes the ubiquitin-mediated proteasomal degradation of NS5A. Interacts with host GPS2. Interacts with host TNFRSF21; this interaction allows the modulation by the virus of JNK, p38 MAPK, STAT3, and Akt signaling pathways in a DR6-dependent manner. Interacts (via N-terminus) with host CIDEB (via N-terminus); this interaction seems to regulate the association of HCV particles with APOE. Interacts with host CHKA/Choline Kinase-alpha; CHKA bridges host PI4KA and NS5A and potentiates NS5A-stimulated PI4KA activity, which then facilitates the targeting of the ternary complex to the ER for viral replication. Interacts with host SPSB2 (via C-terminus); this interaction targets NS5A for ubiquitination and degradation. Interacts with host RAB18; this interaction may promote the association of NS5A and other replicase components with lipid droplets. Interacts (via region D2) with host PPIA/CYPA; the interaction stimulates RNA-binding ability of NS5A and is dependent on the peptidyl-prolyl cis-trans isomerase activity of PPIA/CYPA. Interacts with host TRIM14; this interaction induces the degradation of NS5A. As to quaternary structure, homooligomer. Interacts with non-structural protein 5A. Interacts with host VAPB. Interacts with host PRK2/PKN2. Interacts with host HNRNPA1 and SEPT6; these interactions facilitate viral replication. Part of the replication complex composed of NS2, NS3, NS4A, NS4B, NS5A and the RNA-directed RNA polymerase. It depends on Zn(2+) as a cofactor. Requires Mg(2+) as cofactor. In terms of processing, specific enzymatic cleavages in vivo yield mature proteins. The structural proteins, core, E1, E2 and p7 are produced by proteolytic processing by host signal peptidases. The core protein precursor is synthesized as a 23 kDa, which is retained in the ER membrane through the hydrophobic signal peptide. Cleavage by the signal peptidase releases the 21 kDa mature core protein. The cleavage of the core protein precursor occurs between aminoacids 176 and 188 but the exact cleavage site is not known. Some degraded forms of the core protein appear as well during the course of infection. The other proteins (p7, NS2, NS3, NS4A, NS4B, NS5A and NS5B) are cleaved by the viral proteases. Autoprocessing between NS2 and NS3 is mediated by the NS2 cysteine protease catalytic domain and regulated by the NS3 N-terminal domain. Phosphorylated by host PKC and PKA. Post-translationally, ubiquitinated; mediated by UBE3A and leading to core protein subsequent proteasomal degradation. In terms of processing, highly N-glycosylated. Palmitoylation is required for NS2/3 autoprocessing and E2 recruitment to membranes. Post-translationally, palmitoylated. This modification may play a role in its polymerization or in protein-protein interactions. In terms of processing, phosphorylated on serines in a basal form termed p56. p58 is a hyperphosphorylated form of p56. p56 and p58 coexist in the cell in roughly equivalent amounts. Hyperphosphorylation is dependent on the presence of NS4A. Host CSNK1A1/CKI-alpha or RPS6KB1 kinases may be responsible for NS5A phosphorylation. Tyrosine phosphorylation is essential for the interaction with host SRC. Post-translationally, ubiquitinated. Ubiquitination, most probably at Lys-2350, mediated by host IFI27 and SKP2 leads to proteasomal degradation, restricting viral infection. Ubiquitination by host TRIM22 leads to interruption of viral replication. In terms of processing, the N-terminus is phosphorylated by host PRK2/PKN2.

It is found in the host endoplasmic reticulum membrane. It localises to the host mitochondrion membrane. The protein localises to the virion. The protein resides in the host cytoplasm. Its subcellular location is the host nucleus. It is found in the host lipid droplet. It localises to the virion membrane. The protein localises to the host mitochondrion. The protein resides in the host cell membrane. Its subcellular location is the host perinuclear region. It catalyses the reaction Hydrolysis of four peptide bonds in the viral precursor polyprotein, commonly with Asp or Glu in the P6 position, Cys or Thr in P1 and Ser or Ala in P1'.. It carries out the reaction a ribonucleoside 5'-triphosphate + H2O = a ribonucleoside 5'-diphosphate + phosphate + H(+). The enzyme catalyses ATP + H2O = ADP + phosphate + H(+). The catalysed reaction is RNA(n) + a ribonucleoside 5'-triphosphate = RNA(n+1) + diphosphate. With respect to regulation, inhibited by the antiviral drug hexamethylene amiloride. Inhibition by amantadine appears to be genotype-dependent. Also inhibited by long-alkyl-chain iminosugar derivatives. Activity is up-regulated by PRK2/PKN2-mediated phosphorylation. Packages viral RNA to form a viral nucleocapsid, and promotes virion budding. Participates in the viral particle production as a result of its interaction with the non-structural protein 5A. Binds RNA and may function as a RNA chaperone to induce the RNA structural rearrangements taking place during virus replication. Modulates viral translation initiation by interacting with viral IRES and 40S ribosomal subunit. Affects various cell signaling pathways, host immunity and lipid metabolism. Prevents the establishment of cellular antiviral state by blocking the interferon-alpha/beta (IFN-alpha/beta) and IFN-gamma signaling pathways and by blocking the formation of phosphorylated STAT1 and promoting ubiquitin-mediated proteasome-dependent degradation of STAT1. Activates STAT3 leading to cellular transformation. Regulates the activity of cellular genes, including c-myc and c-fos. May repress the promoter of p53, and sequester CREB3 and SP110 isoform 3/Sp110b in the cytoplasm. Represses cell cycle negative regulating factor CDKN1A, thereby interrupting an important check point of normal cell cycle regulation. Targets transcription factors involved in the regulation of inflammatory responses and in the immune response: suppresses TNF-induced NF-kappa-B activation, and activates AP-1. Binds to dendritic cells (DCs) via C1QR1, resulting in down-regulation of T-lymphocytes proliferation. Alters lipid metabolism by interacting with hepatocellular proteins involved in lipid accumulation and storage. Induces up-regulation of FAS promoter activity, and thereby contributes to the increased triglyceride accumulation in hepatocytes (steatosis). Its function is as follows. Forms a heterodimer with envelope glycoprotein E2, which mediates virus attachment to the host cell, virion internalization through clathrin-dependent endocytosis and fusion with host membrane. Fusion with the host cell is most likely mediated by both E1 and E2, through conformational rearrangements of the heterodimer required for fusion rather than a classical class II fusion mechanism. E1/E2 heterodimer binds host apolipoproteins such as APOB and ApoE thereby forming a lipo-viro-particle (LVP). APOE associated to the LVP allows the initial virus attachment to cell surface receptors such as the heparan sulfate proteoglycans (HSPGs), syndecan-1 (SDC1), syndecan-1 (SDC2), the low-density lipoprotein receptor (LDLR) and scavenger receptor class B type I (SCARB1). The cholesterol transfer activity of SCARB1 allows E2 exposure and binding of E2 to SCARB1 and the tetraspanin CD81. E1/E2 heterodimer binding on CD81 activates the epithelial growth factor receptor (EGFR) signaling pathway. Diffusion of the complex E1-E2-EGFR-SCARB1-CD81 to the cell lateral membrane allows further interaction with Claudin 1 (CLDN1) and occludin (OCLN) to finally trigger HCV entry. Functionally, forms a heterodimer with envelope glycoprotein E1, which mediates virus attachment to the host cell, virion internalization through clathrin-dependent endocytosis and fusion with host membrane. Fusion with the host cell is most likely mediated by both E1 and E2, through conformational rearrangements of the heterodimer required for fusion rather than a classical class II fusion mechanism. The interaction between envelope glycoprotein E2 and host apolipoprotein E/APOE allows the proper assembly, maturation and infectivity of the viral particles. This interaction is probably promoted via the up-regulation of cellular autophagy by the virus. E1/E2 heterodimer binds host apolipoproteins such as APOB and APOE thereby forming a lipo-viro-particle (LVP). APOE associated to the LVP allows the initial virus attachment to cell surface receptors such as the heparan sulfate proteoglycans (HSPGs), syndecan-1 (SDC1), syndecan-1 (SDC2), the low-density lipoprotein receptor (LDLR) and scavenger receptor class B type I (SCARB1). The cholesterol transfer activity of SCARB1 allows E2 exposure and binding of E2 to SCARB1 and the tetraspanin CD81. E1/E2 heterodimer binding on CD81 activates the epithelial growth factor receptor (EGFR) signaling pathway. Diffusion of the complex E1-E2-EGFR-SCARB1-CD81 to the cell lateral membrane allows further interaction with Claudin 1 (CLDN1) and occludin (OCLN) to finally trigger HCV entry. Inhibits host EIF2AK2/PKR activation, preventing the establishment of an antiviral state. Viral ligand for CD209/DC-SIGN and CLEC4M/DC-SIGNR, which are respectively found on dendritic cells (DCs), and on liver sinusoidal endothelial cells and macrophage-like cells of lymph node sinuses. These interactions allow the capture of circulating HCV particles by these cells and subsequent facilitated transmission to permissive cells such as hepatocytes and lymphocyte subpopulations. The interaction between E2 and host amino acid transporter complex formed by SLC3A2 and SLC7A5/LAT1 may facilitate viral entry into host cell. In terms of biological role, ion channel protein that acts as a viroporin and plays an essential role in the assembly, envelopment and secretion of viral particles. Regulates the host cell secretory pathway, which induces the intracellular retention of viral glycoproteins and favors assembly of viral particles. Creates a pore in acidic organelles and releases Ca(2+) and H(+) in the cytoplasm of infected cells, leading to a productive viral infection. High levels of cytoplasmic Ca(2+) may trigger membrane trafficking and transport of viral ER-associated proteins to viroplasms, sites of viral genome replication. This ionic imbalance induces the assembly of the inflammasome complex, which triggers the maturation of pro-IL-1beta into IL-1beta through the action of caspase-1. Targets also host mitochondria and induces mitochondrial depolarization. In addition of its role as a viroporin, acts as a lipid raft adhesion factor. Cysteine protease required for the proteolytic auto-cleavage between the non-structural proteins NS2 and NS3. The N-terminus of NS3 is required for the function of NS2 protease (active region NS2-3). Promotes the initiation of viral particle assembly by mediating the interaction between structural and non-structural proteins. Its function is as follows. Displays three enzymatic activities: serine protease with a chymotrypsin-like fold, NTPase and RNA helicase. NS3 serine protease, in association with NS4A, is responsible for the cleavages of NS3-NS4A, NS4A-NS4B, NS4B-NS5A and NS5A-NS5B. The NS3/NS4A complex prevents phosphorylation of host IRF3, thus preventing the establishment of dsRNA induced antiviral state. The NS3/NS4A complex induces host amino acid transporter component SLC3A2, thus contributing to HCV propagation. NS3 RNA helicase binds to RNA and unwinds both dsDNA and dsRNA in the 3' to 5' direction, and likely resolves RNA complicated stable secondary structures in the template strand. Binds a single ATP and catalyzes the unzipping of a single base pair of dsRNA. Inhibits host antiviral proteins TBK1 and IRF3 thereby preventing the establishment of an antiviral state. Cleaves host MAVS/CARDIF thereby preventing the establishment of an antiviral state. Cleaves host TICAM1/TRIF, thereby disrupting TLR3 signaling and preventing the establishment of an antiviral state. Functionally, peptide cofactor which forms a non-covalent complex with the N-terminal of NS3 serine protease. The NS3/NS4A complex prevents phosphorylation of host IRF3, thus preventing the establishment of dsRNA induced antiviral state. The NS3/NS4A complex induces host amino acid transporter component SLC3A2, thus contributing to HCV propagation. In terms of biological role, induces a specific membrane alteration that serves as a scaffold for the virus replication complex. This membrane alteration gives rise to the so-called ER-derived membranous web that contains the replication complex. NS4B self-interaction contributes to its function in membranous web formation. Promotes host TRIF protein degradation in a CASP8-dependent manner thereby inhibiting host TLR3-mediated interferon signaling. Disrupts the interaction between STING and TBK1 contributing to the inhibition of interferon signaling. Phosphorylated protein that is indispensable for viral replication and assembly. Both hypo- and hyperphosphorylated states are required for the viral life cycle. The hyperphosphorylated form of NS5A is an inhibitor of viral replication. Involved in RNA-binding and especially in binding to the viral genome. Zinc is essential for RNA-binding. Participates in the viral particle production as a result of its interaction with the mature viral core protein. Its interaction with host VAPB may target the viral replication complex to vesicles. Down-regulates viral IRES translation initiation. Mediates interferon resistance, presumably by interacting with and inhibiting host EIF2AK2/PKR. Prevents BIN1-induced apoptosis. Acts as a transcriptional activator of some host genes important for viral replication when localized in the nucleus. Via the interaction with host PACSIN2, modulates lipid droplet formation in order to promote virion assembly. Modulates TNFRSF21/DR6 signaling pathway for viral propagation. Its function is as follows. RNA-dependent RNA polymerase that performs primer-template recognition and RNA synthesis during viral replication. Initiates RNA transcription/replication at a flavin adenine dinucleotide (FAD), resulting in a 5'- FAD cap on viral RNAs. In this way, recognition of viral 5' RNA by host pattern recognition receptors can be bypassed, thereby evading activation of antiviral pathways. The sequence is that of Genome polyprotein from Hepatitis C virus genotype 2k (isolate VAT96) (HCV).